Here is a 444-residue protein sequence, read N- to C-terminus: Tol-Pal system protein TolB (444 aa).

An N-terminal signal peptide occupies residues 1 to 19 (MRNIIYFILSLLFSVTSYA).

Belongs to the TolB family. The Tol-Pal system is composed of five core proteins: the inner membrane proteins TolA, TolQ and TolR, the periplasmic protein TolB and the outer membrane protein Pal. They form a network linking the inner and outer membranes and the peptidoglycan layer.

It is found in the periplasm. Part of the Tol-Pal system, which plays a role in outer membrane invagination during cell division and is important for maintaining outer membrane integrity. The polypeptide is Tol-Pal system protein TolB (Rickettsia rickettsii (strain Sheila Smith)).